A 103-amino-acid polypeptide reads, in one-letter code: Small ribosomal subunit protein uS10 (103 aa).

The protein belongs to the universal ribosomal protein uS10 family. As to quaternary structure, part of the 30S ribosomal subunit.

Its function is as follows. Involved in the binding of tRNA to the ribosomes. The chain is Small ribosomal subunit protein uS10 from Haemophilus ducreyi (strain 35000HP / ATCC 700724).